The sequence spans 234 residues: Demethylmenaquinone methyltransferase (234 aa).

S-adenosyl-L-methionine-binding positions include T58, D79, and 106 to 107; that span reads NA.

The protein belongs to the class I-like SAM-binding methyltransferase superfamily. MenG/UbiE family.

It carries out the reaction a 2-demethylmenaquinol + S-adenosyl-L-methionine = a menaquinol + S-adenosyl-L-homocysteine + H(+). Its pathway is quinol/quinone metabolism; menaquinone biosynthesis; menaquinol from 1,4-dihydroxy-2-naphthoate: step 2/2. Methyltransferase required for the conversion of demethylmenaquinol (DMKH2) to menaquinol (MKH2). The polypeptide is Demethylmenaquinone methyltransferase (Geobacillus stearothermophilus (Bacillus stearothermophilus)).